We begin with the raw amino-acid sequence, 416 residues long: Adenylosuccinate synthetase (416 aa).

Residues Gly13 to Lys19 and Gly41 to Thr43 contribute to the GTP site. The active-site Proton acceptor is Asp14. The Mg(2+) site is built by Asp14 and Gly41. IMP contacts are provided by residues Asp14–Lys17, Asn39–His42, Thr126, Arg140, Gln220, Thr235, and Arg299. The Proton donor role is filled by His42. Thr295–Arg301 contributes to the substrate binding site. GTP contacts are provided by residues Arg301, Lys327–Asp329, and Ser405–Ser407.

Belongs to the adenylosuccinate synthetase family. In terms of assembly, homodimer. Mg(2+) serves as cofactor.

Its subcellular location is the cytoplasm. It carries out the reaction IMP + L-aspartate + GTP = N(6)-(1,2-dicarboxyethyl)-AMP + GDP + phosphate + 2 H(+). Its pathway is purine metabolism; AMP biosynthesis via de novo pathway; AMP from IMP: step 1/2. In terms of biological role, plays an important role in the de novo pathway of purine nucleotide biosynthesis. Catalyzes the first committed step in the biosynthesis of AMP from IMP. The protein is Adenylosuccinate synthetase of Campylobacter fetus subsp. fetus (strain 82-40).